Here is a 467-residue protein sequence, read N- to C-terminus: Amino-acid permease RocE (467 aa).

Transmembrane regions (helical) follow at residues 21 to 41 (FMIS…GFTI), 47 to 67 (LGAV…MLCL), 87 to 107 (FISP…WAVT), 122 to 142 (WFPH…MFIL), 162 to 182 (ILII…LIDL), 207 to 227 (MLIT…IGVA), 246 to 266 (VWRT…MIPW), 283 to 303 (IGIP…LLSV), 336 to 356 (VPMY…LTKF), 361 to 381 (TVYM…WITI), 409 to 429 (YPVL…SLAF), and 435 to 455 (IALY…HVVI).

It belongs to the amino acid-polyamine-organocation (APC) superfamily. Amino acid transporter (AAT) (TC 2.A.3.1) family.

The protein localises to the cell membrane. Functionally, putative transport protein involved in arginine degradative pathway. Probably transports arginine or ornithine. The polypeptide is Amino-acid permease RocE (Bacillus subtilis (strain 168)).